Consider the following 518-residue polypeptide: Homoserine O-acetyltransferase (518 aa).

The region spanning 69-468 is the AB hydrolase-1 domain; sequence NVMVICHALT…DSPEGHDAFL (400 aa). Ser-182 is an active-site residue. Ser-182 (nucleophile) is an active-site residue. Residues 267-365 form a disordered region; that stretch reads RFGRNIPDPS…PNSVSDPFRP (99 aa). The span at 290-303 shows a compositional bias: basic and acidic residues; it reads PAEEHYDIHNEGFR. Low complexity predominate over residues 310-341; it reads RSSTTTSDAPPSPTRTSSTSSTDAITPASTTP. Residues Asp-435 and His-464 contribute to the active site.

It belongs to the AB hydrolase superfamily. MetX family.

The catalysed reaction is L-homoserine + acetyl-CoA = O-acetyl-L-homoserine + CoA. It participates in amino-acid biosynthesis; L-methionine biosynthesis via de novo pathway; O-acetyl-L-homoserine from L-homoserine: step 1/1. Functionally, commits homoserine to the methionine biosynthesis pathway by catalyzing its O-acetylation. This is Homoserine O-acetyltransferase (MET2) from Ascobolus immersus.